Here is a 484-residue protein sequence, read N- to C-terminus: Probable glycine dehydrogenase (decarboxylating) subunit 2 (484 aa).

An N6-(pyridoxal phosphate)lysine modification is found at lysine 270.

It belongs to the GcvP family. C-terminal subunit subfamily. In terms of assembly, the glycine cleavage system is composed of four proteins: P, T, L and H. In this organism, the P 'protein' is a heterodimer of two subunits. It depends on pyridoxal 5'-phosphate as a cofactor.

It carries out the reaction N(6)-[(R)-lipoyl]-L-lysyl-[glycine-cleavage complex H protein] + glycine + H(+) = N(6)-[(R)-S(8)-aminomethyldihydrolipoyl]-L-lysyl-[glycine-cleavage complex H protein] + CO2. In terms of biological role, the glycine cleavage system catalyzes the degradation of glycine. The P protein binds the alpha-amino group of glycine through its pyridoxal phosphate cofactor; CO(2) is released and the remaining methylamine moiety is then transferred to the lipoamide cofactor of the H protein. The protein is Probable glycine dehydrogenase (decarboxylating) subunit 2 of Desulforamulus reducens (strain ATCC BAA-1160 / DSM 100696 / MI-1) (Desulfotomaculum reducens).